The sequence spans 556 residues: Polypyrimidine tract-binding protein 1 (556 aa).

At methionine 1 the chain carries N-acetylmethionine. Serine 16 is modified (phosphoserine). A disordered region spans residues 35 to 54 (ASAANGNDSKKFKGDNRSTG). 3 consecutive RRM domains span residues 58–142 (RVIH…SSPN), 183–259 (LRII…FSKL), and 362–436 (SVLL…LSKH). A Glycyl lysine isopeptide (Lys-Gly) (interchain with G-Cter in SUMO2) cross-link involves residue lysine 64. Tyrosine 126 is subject to Phosphotyrosine. The residue at position 137 (threonine 137) is a Phosphothreonine. Residue serine 140 is modified to Phosphoserine. Residue lysine 217 forms a Glycyl lysine isopeptide (Lys-Gly) (interchain with G-Cter in SUMO2) linkage. The tract at residues 436 to 458 (HQSVQLPREGQEDQGLTKDYGSS) is disordered. The residue at position 458 (serine 458) is a Phosphoserine. Residues 479 to 554 (ATLHLSNIPP…HHLRVSFSKS (76 aa)) form the RRM 4 domain.

In terms of assembly, monomer. Part of a ternary complex containing KHSRP, PTBP1, PTBP2 and HNRPH1. Interacts with RAVER1 and SFPQ.

The protein localises to the nucleus. Functionally, plays a role in pre-mRNA splicing and in the regulation of alternative splicing events. Activates exon skipping of its own pre-mRNA during muscle cell differentiation. Binds to the polypyrimidine tract of introns. May promote RNA looping when bound to two separate polypyrimidine tracts in the same pre-mRNA. May promote the binding of U2 snRNP to pre-mRNA. Cooperates with RAVER1 to modulate switching between mutually exclusive exons during maturation of the TPM1 pre-mRNA. Represses the splicing of MAPT/Tau exon 10. Binds to polypyrimidine-rich controlling element (PCE) of CFTR and promotes exon skipping of CFTR exon 9, thereby antagonizing TIA1 and its role in exon inclusion of CFTR exon 9. Plays a role in the splicing of pyruvate kinase PKM by binding repressively to a polypyrimidine tract flanking PKM exon 9, inhibiting exon 9 inclusion and resulting in exon 10 inclusion and production of the PKM M2 isoform. This chain is Polypyrimidine tract-binding protein 1 (Ptbp1), found in Rattus norvegicus (Rat).